Consider the following 715-residue polypeptide: 1,4-alpha-glucan branching enzyme GlgB (715 aa).

Asp396 (nucleophile) is an active-site residue. Glu449 serves as the catalytic Proton donor.

It belongs to the glycosyl hydrolase 13 family. GlgB subfamily. Monomer.

It catalyses the reaction Transfers a segment of a (1-&gt;4)-alpha-D-glucan chain to a primary hydroxy group in a similar glucan chain.. Its pathway is glycan biosynthesis; glycogen biosynthesis. In terms of biological role, catalyzes the formation of the alpha-1,6-glucosidic linkages in glycogen by scission of a 1,4-alpha-linked oligosaccharide from growing alpha-1,4-glucan chains and the subsequent attachment of the oligosaccharide to the alpha-1,6 position. The sequence is that of 1,4-alpha-glucan branching enzyme GlgB from Vibrio vulnificus (strain YJ016).